Reading from the N-terminus, the 424-residue chain is Serine--tRNA ligase (424 aa).

230–232 (TAE) serves as a coordination point for L-serine. 261-263 (RSE) contacts ATP. E284 is a binding site for L-serine. 348 to 351 (EISS) contributes to the ATP binding site. S384 provides a ligand contact to L-serine.

Belongs to the class-II aminoacyl-tRNA synthetase family. Type-1 seryl-tRNA synthetase subfamily. As to quaternary structure, homodimer. The tRNA molecule binds across the dimer.

It is found in the cytoplasm. The enzyme catalyses tRNA(Ser) + L-serine + ATP = L-seryl-tRNA(Ser) + AMP + diphosphate + H(+). The catalysed reaction is tRNA(Sec) + L-serine + ATP = L-seryl-tRNA(Sec) + AMP + diphosphate + H(+). It functions in the pathway aminoacyl-tRNA biosynthesis; selenocysteinyl-tRNA(Sec) biosynthesis; L-seryl-tRNA(Sec) from L-serine and tRNA(Sec): step 1/1. Functionally, catalyzes the attachment of serine to tRNA(Ser). Is also able to aminoacylate tRNA(Sec) with serine, to form the misacylated tRNA L-seryl-tRNA(Sec), which will be further converted into selenocysteinyl-tRNA(Sec). The chain is Serine--tRNA ligase from Streptococcus pneumoniae (strain JJA).